The primary structure comprises 509 residues: Protein disulfide-isomerase (509 aa).

Residues 1–18 (MLRRAVLCLALAVTAGWA) form the signal peptide. The region spanning 19-135 (WAAEEEDNVL…IVNWLKKRTG (117 aa)) is the Thioredoxin 1 domain. Catalysis depends on nucleophile residues C54 and C57. Cysteines 54 and 57 form a disulfide. K223 and K272 each carry N6-succinyllysine. 2 positions are modified to phosphoserine: S332 and S358. Residues 347–476 (FLEGKIKPHL…FKKFLESGGQ (130 aa)) form the Thioredoxin 2 domain. Active-site nucleophile residues include C398 and C401. Cysteines 398 and 401 form a disulfide. S428 carries the post-translational modification Phosphoserine. The disordered stretch occupies residues 471–509 (LESGGQDGAGDEDGLEDLEEAEEPDLEEDDDQKAVRDEL). Positions 479 to 501 (AGDEDGLEDLEEAEEPDLEEDDD) are enriched in acidic residues. Residues 506 to 509 (RDEL) carry the Prevents secretion from ER motif.

Belongs to the protein disulfide isomerase family. In terms of assembly, heterodimer; heterodimerizes with the protein microsomal triglyceride transfer MTTP. Homodimer. Monomers and homotetramers may also occur. Interacts with P4HA2, forming a heterotetramer consisting of 2 alpha subunits (P4HA2) and 2 beta (P4HB), where P4HB plays the role of a structural subunit; this tetramer catalyzes the formation of 4-hydroxyproline in collagen. Also constitutes the structural subunit of the microsomal triacylglycerol transfer protein MTTP in mammalian cells. Stabilizes both enzymes and retain them in the ER without contributing to the catalytic activity. Binds UBQLN1. Interacts with ERO1B. Interacts with ILDR2. Interacts with ERN1/IRE1A (via N-terminus); the interaction is enhanced by phosphorylation of P4HB by FAM20C in response to endoplasmic reticulum stress and results in attenuation of ERN1 activity. In terms of processing, phosphorylation of Ser-358 by FAM20C is induced by endoplasmic reticulum stress and results in a functional switch from oxidoreductase to molecular chaperone. It also promotes interaction with ERN1.

The protein localises to the endoplasmic reticulum. It localises to the endoplasmic reticulum lumen. Its subcellular location is the melanosome. The protein resides in the cell membrane. It carries out the reaction Catalyzes the rearrangement of -S-S- bonds in proteins.. In terms of biological role, this multifunctional protein catalyzes the formation, breakage and rearrangement of disulfide bonds. At the cell surface, seems to act as a reductase that cleaves disulfide bonds of proteins attached to the cell. May therefore cause structural modifications of exofacial proteins. Inside the cell, seems to form/rearrange disulfide bonds of nascent proteins. At high concentrations and following phosphorylation by FAM20C, functions as a chaperone that inhibits aggregation of misfolded proteins. At low concentrations, facilitates aggregation (anti-chaperone activity). May be involved with other chaperones in the structural modification of the TG precursor in hormone biogenesis. Also acts as a structural subunit of various enzymes such as prolyl 4-hydroxylase and microsomal triacylglycerol transfer protein MTTP. Receptor for LGALS9; the interaction retains P4HB at the cell surface of Th2 T helper cells, increasing disulfide reductase activity at the plasma membrane, altering the plasma membrane redox state and enhancing cell migration. This is Protein disulfide-isomerase (P4HB) from Oryctolagus cuniculus (Rabbit).